The primary structure comprises 457 residues: MEFDTIAAISTPPGEGAIAIIRLSGPEAIQIADRIFYAKNSLSEAESHTIHYGHIKEDGEVIEEVMVTVMRAPRTFTREDVVEINAHGGIVSVNRVLQLLLRNGANLAEPGEFTKRAFLNGRIDLSQAEAVMDLIRAKTDRAMGVAIRQMDGNLSRLIRNLRQEILDALAQVEVNIDYPEYDDVEEMTQRMLLEKTELVRASVEQLLQTASQGKILREGLATAIIGRPNVGKSSLLNQLIQEEKAIVTDIAGTTRDIIEEYVNVRGVPLRLIDTAGIRETEDIVEKIGVERSRKALADADFILLVLNQNEELTVEDEALFEAAAGHNYVVVLNKTDLETKLDINRVRELAGENPIVSTSLVNDEGLEALEEAIKALFFAGDIDAGDATYVSNVRHIALLHQALEALNGVTTGIQLGMPVDIVQIDMTRAWDLLGEITGDSVQDELLDQLFNQFCLGK.

Arg22, Glu83, and Arg122 together coordinate (6S)-5-formyl-5,6,7,8-tetrahydrofolate. One can recognise a TrmE-type G domain in the interval 219–378 (GLATAIIGRP…LEEAIKALFF (160 aa)). Asn229 is a K(+) binding site. GTP contacts are provided by residues 229–234 (NVGKSS), 248–254 (TDIAGTT), and 273–276 (DTAG). Residue Ser233 participates in Mg(2+) binding. Thr248, Ile250, and Thr253 together coordinate K(+). A Mg(2+)-binding site is contributed by Thr254. Lys457 contacts (6S)-5-formyl-5,6,7,8-tetrahydrofolate.

This sequence belongs to the TRAFAC class TrmE-Era-EngA-EngB-Septin-like GTPase superfamily. TrmE GTPase family. Homodimer. Heterotetramer of two MnmE and two MnmG subunits. K(+) is required as a cofactor.

The protein localises to the cytoplasm. Its function is as follows. Exhibits a very high intrinsic GTPase hydrolysis rate. Involved in the addition of a carboxymethylaminomethyl (cmnm) group at the wobble position (U34) of certain tRNAs, forming tRNA-cmnm(5)s(2)U34. This Listeria innocua serovar 6a (strain ATCC BAA-680 / CLIP 11262) protein is tRNA modification GTPase MnmE.